Reading from the N-terminus, the 663-residue chain is UvrABC system protein B (663 aa).

Positions 26–414 (DGLESGLAKQ…DNVAEQVVRP (389 aa)) constitute a Helicase ATP-binding domain. 39–46 (GVTGSGKT) is an ATP binding site. The Beta-hairpin signature appears at 92-115 (YYDYYQPEAYVPASDTFIEKDASI). The 167-residue stretch at 430–596 (QVDDLMSEIR…GINKSVEDIL (167 aa)) folds into the Helicase C-terminal domain. The UVR domain maps to 624–659 (VKQINALEKQMYSHAQNMEFELAAKIRDEYLLLKEQ).

This sequence belongs to the UvrB family. As to quaternary structure, forms a heterotetramer with UvrA during the search for lesions. Interacts with UvrC in an incision complex.

The protein resides in the cytoplasm. In terms of biological role, the UvrABC repair system catalyzes the recognition and processing of DNA lesions. A damage recognition complex composed of 2 UvrA and 2 UvrB subunits scans DNA for abnormalities. Upon binding of the UvrA(2)B(2) complex to a putative damaged site, the DNA wraps around one UvrB monomer. DNA wrap is dependent on ATP binding by UvrB and probably causes local melting of the DNA helix, facilitating insertion of UvrB beta-hairpin between the DNA strands. Then UvrB probes one DNA strand for the presence of a lesion. If a lesion is found the UvrA subunits dissociate and the UvrB-DNA preincision complex is formed. This complex is subsequently bound by UvrC and the second UvrB is released. If no lesion is found, the DNA wraps around the other UvrB subunit that will check the other stand for damage. This is UvrABC system protein B from Legionella pneumophila subsp. pneumophila (strain Philadelphia 1 / ATCC 33152 / DSM 7513).